Consider the following 1231-residue polypeptide: Multifunctional 2-oxoglutarate metabolism enzyme (1231 aa).

The segment at 1-41 (MANISSPFGQNEWLVEEMYRKFRDDPSSVDPSWHEFLVDYS) is 2-oxoglutarate dehydrogenase E1, N-terminal part. The segment at 38–79 (VDYSPEPTSQPAAEPTRVTSPLVAERAAAAAPQAPPKPADTA) is disordered. The linker stretch occupies residues 42 to 88 (PEPTSQPAAEPTRVTSPLVAERAAAAAPQAPPKPADTAAAGNGVVAA). Positions 58–69 (PLVAERAAAAAP) are enriched in low complexity. Residues 89 to 337 (LAAKTAVPPP…LRTIHELLLS (249 aa)) form a succinyltransferase E2 region. Catalysis depends on His-316, which acts as the Proton acceptor; for succinyltransferase activity. The interval 338–1231 (DGFWDEVFRE…QQEILDEAFG (894 aa)) is 2-oxoglutarate dehydrogenase E1, C-terminal part. Position 542 (Arg-542) interacts with thiamine diphosphate. 2 residues coordinate 2-oxoglutarate: His-581 and Ser-606. The thiamine diphosphate site is built by Ser-606, Leu-608, Asp-649, Ala-650, Ala-651, and Asn-682. Asp-649 lines the Mg(2+) pocket. Mg(2+)-binding residues include Asn-682 and Ile-684. Residues 787 to 817 (DISMKEAEDALRDYQGQLERVFNEVRELEKH) are a coiled coil. Residue His-1024 participates in 2-oxoglutarate binding. 7 residues coordinate acetyl-CoA: Thr-1042, Arg-1058, Lys-1093, Ser-1096, Gln-1146, Arg-1153, and Arg-1154.

This sequence belongs to the 2-oxoacid dehydrogenase family. Kgd subfamily. In terms of assembly, homodimer. The 2-oxoglutarate dehydrogenase (ODH) complex contains multiple copies of three enzymatic components: 2-oxoglutarate dehydrogenase (E1), dihydrolipoamide succinyltransferase (E2) and lipoamide dehydrogenase (E3). The cofactor is Mg(2+). Thiamine diphosphate is required as a cofactor.

The catalysed reaction is glyoxylate + 2-oxoglutarate + H(+) = 2-hydroxy-3-oxoadipate + CO2. It carries out the reaction 2-oxoglutarate + H(+) = succinate semialdehyde + CO2. It catalyses the reaction N(6)-[(R)-lipoyl]-L-lysyl-[protein] + 2-oxoglutarate + H(+) = N(6)-[(R)-S(8)-succinyldihydrolipoyl]-L-lysyl-[protein] + CO2. The enzyme catalyses N(6)-[(R)-dihydrolipoyl]-L-lysyl-[protein] + succinyl-CoA = N(6)-[(R)-S(8)-succinyldihydrolipoyl]-L-lysyl-[protein] + CoA. Its pathway is carbohydrate metabolism; tricarboxylic acid cycle; succinate from 2-oxoglutarate (transferase route): step 1/2. It participates in carbohydrate metabolism; tricarboxylic acid cycle; succinyl-CoA from 2-oxoglutarate (dehydrogenase route): step 1/1. Its activity is regulated as follows. Alpha-ketoglutarate dehydrogenase and decarboxylase activities are inhibited by unphosphorylated GarA, and allosterically activated by acetyl-CoA, the main substrate of the TCA cycle. Functionally, shows three enzymatic activities that share a first common step, the attack of thiamine-PP on 2-oxoglutarate (alpha-ketoglutarate, KG), leading to the formation of an enamine-thiamine-PP intermediate upon decarboxylation. Thus, displays KGD activity, catalyzing the decarboxylation from five-carbon 2-oxoglutarate to four-carbon succinate semialdehyde (SSA). Also catalyzes C-C bond formation between the activated aldehyde formed after decarboxylation of alpha-ketoglutarate and the carbonyl of glyoxylate (GLX), to yield 2-hydroxy-3-oxoadipate (HOA), which spontaneously decarboxylates to form 5-hydroxylevulinate (HLA). And is also a component of the 2-oxoglutarate dehydrogenase (ODH) complex, that catalyzes the overall conversion of 2-oxoglutarate to succinyl-CoA and CO(2). The KG decarboxylase and KG dehydrogenase reactions provide two alternative, tightly regulated, pathways connecting the oxidative and reductive branches of the TCA cycle. In Mycobacterium tuberculosis (strain ATCC 25177 / H37Ra), this protein is Multifunctional 2-oxoglutarate metabolism enzyme (kgd).